The primary structure comprises 75 residues: Conotoxin ar11a (75 aa).

A signal peptide spans 1 to 19 (MKLCATFLLVLVTLPLVTG). Positions 20–36 (EKSSERSLSGAILRGVR) are excised as a propeptide. Intrachain disulfides connect C39-C53, C46-C58, C52-C63, and C57-C70.

As to expression, expressed by the venom duct.

Its subcellular location is the secreted. Its function is as follows. Both natural (L-Leu form) and synthetic (D-Leu from) peptides equally cause sensitivity to touch and body tremor. Neither L-Leu form nor D-Leu form is active on nerve-muscle preparation. This is Conotoxin ar11a from Conus arenatus (Sand-dusted cone).